We begin with the raw amino-acid sequence, 252 residues long: Triosephosphate isomerase (252 aa).

10 to 12 is a substrate binding site; that stretch reads NWK. Residue His-96 is the Electrophile of the active site. Glu-168 (proton acceptor) is an active-site residue. Substrate is bound by residues Gly-174, Ser-214, and 235–236; that span reads GG.

The protein belongs to the triosephosphate isomerase family. In terms of assembly, homodimer.

It is found in the cytoplasm. It carries out the reaction D-glyceraldehyde 3-phosphate = dihydroxyacetone phosphate. It participates in carbohydrate biosynthesis; gluconeogenesis. Its pathway is carbohydrate degradation; glycolysis; D-glyceraldehyde 3-phosphate from glycerone phosphate: step 1/1. Its function is as follows. Involved in the gluconeogenesis. Catalyzes stereospecifically the conversion of dihydroxyacetone phosphate (DHAP) to D-glyceraldehyde-3-phosphate (G3P). The polypeptide is Triosephosphate isomerase (Lactobacillus helveticus (strain DPC 4571)).